Here is a 184-residue protein sequence, read N- to C-terminus: Ribosome-recycling factor (184 aa).

This sequence belongs to the RRF family.

The protein localises to the cytoplasm. Its function is as follows. Responsible for the release of ribosomes from messenger RNA at the termination of protein biosynthesis. May increase the efficiency of translation by recycling ribosomes from one round of translation to another. The sequence is that of Ribosome-recycling factor from Clostridium botulinum (strain Langeland / NCTC 10281 / Type F).